Reading from the N-terminus, the 466-residue chain is Pentatricopeptide repeat-containing protein At4g01400, mitochondrial (466 aa).

Residues 1 to 34 (MIRRPIYDFAAVFRHLTSPLSTSSRFLFYSSSEH) constitute a mitochondrion transit peptide. PPR repeat units follow at residues 118-152 (TGEIFTYLIKVYAEAKLPEKVLSTFYKMLEFNFTP), 153-188 (QPKHLNRILDVLVSHRGYLQKAFELFKSSRLHGVMP), 189-223 (NTRSYNLLMQAFCLNDDLSIAYQLFGKMLERDVVP), 224-258 (DVDSYKILIQGFCRKGQVNGAMELLDDMLNKGFVP), 259-293 (DRLSYTTLLNSLCRKTQLREAYKLLCRMKLKGCNP), 294-328 (DLVHYNTMILGFCREDRAMDARKVLDDMLSNGCSP), 329-363 (NSVSYRTLIGGLCDQGMFDEGKKYLEEMISKGFSP), and 364-398 (HFSVSNCLVKGFCSFGKVEEACDVVEVVMKNGETL).

It belongs to the PPR family. P subfamily.

It localises to the mitochondrion. The polypeptide is Pentatricopeptide repeat-containing protein At4g01400, mitochondrial (Arabidopsis thaliana (Mouse-ear cress)).